Here is a 304-residue protein sequence, read N- to C-terminus: MSLFHLIAPSGYCIKQHAALRGIQRLTDAGHQVNNVEVIARRCERFAGTETERLEDLNSLARLTTPNTIVLAVRGGYGASRLLADIDWQALVARQQHDPLLICGHSDFTAIQCGLLAHGNVITFSGPMLVANFGADELNAFTEHHFWLALRNETFTIEWQGEGPTCRAEGTLWGGNLAMLISLIGTPWMPKIENGILVLEDINEHPFRVERMLLQLYHAGILPRQKAIILGSFSGSTPNDYDAGYNLESVYAFLRSRLSIPLITGLDFGHEQRTVTLPLGAHAILNNTREGTQLTISGHPVLKM.

Ser106 acts as the Nucleophile in catalysis. Active-site charge relay system residues include Glu200 and His270.

It belongs to the peptidase S66 family.

It is found in the cytoplasm. It catalyses the reaction N-acetyl-D-glucosaminyl-N-acetylmuramoyl-L-alanyl-meso-2,6-diaminoheptanedioyl-D-alanine + H2O = N-acetyl-D-glucosaminyl-N-acetylmuramoyl-L-alanyl-meso-2,6-diaminoheptanedioate + D-alanine. It functions in the pathway cell wall biogenesis; peptidoglycan recycling. Its activity is regulated as follows. Inhibited by beta-lactams containing a D-amino acid side chain. Functionally, releases the terminal D-alanine residue from the cytoplasmic tetrapeptide recycling product L-Ala-gamma-D-Glu-meso-Dap-D-Ala. To a lesser extent, can also cleave D-Ala from murein derivatives containing the tetrapeptide, i.e. MurNAc-tetrapeptide, UDP-MurNAc-tetrapeptide, GlcNAc-MurNAc-tetrapeptide, and GlcNAc-anhMurNAc-tetrapeptide. Does not act on murein sacculi or cross-linked muropeptides. The tripeptides produced by the LcdA reaction can then be reused as peptidoglycan building blocks; LcdA is thereby involved in murein recycling. Is also essential for viability during stationary phase. This Escherichia coli (strain K12) protein is Murein tetrapeptide carboxypeptidase (ldcA).